The following is a 208-amino-acid chain: Ribosomal RNA large subunit methyltransferase E (208 aa).

Residues glycine 62, tryptophan 64, aspartate 82, aspartate 98, and aspartate 123 each contribute to the S-adenosyl-L-methionine site. Catalysis depends on lysine 163, which acts as the Proton acceptor.

The protein belongs to the class I-like SAM-binding methyltransferase superfamily. RNA methyltransferase RlmE family.

The protein resides in the cytoplasm. It carries out the reaction uridine(2552) in 23S rRNA + S-adenosyl-L-methionine = 2'-O-methyluridine(2552) in 23S rRNA + S-adenosyl-L-homocysteine + H(+). Its function is as follows. Specifically methylates the uridine in position 2552 of 23S rRNA at the 2'-O position of the ribose in the fully assembled 50S ribosomal subunit. This is Ribosomal RNA large subunit methyltransferase E from Glaesserella parasuis serovar 5 (strain SH0165) (Haemophilus parasuis).